We begin with the raw amino-acid sequence, 43 residues long: Cytochrome b559 subunit beta (43 aa).

Residues 18-34 traverse the membrane as a helical segment; the sequence is WLAVHTLAVPSVFFLGA. Position 22 (H22) interacts with heme.

Belongs to the PsbE/PsbF family. In terms of assembly, heterodimer of an alpha subunit and a beta subunit. PSII is composed of 1 copy each of membrane proteins PsbA, PsbB, PsbC, PsbD, PsbE, PsbF, PsbH, PsbI, PsbJ, PsbK, PsbL, PsbM, PsbT, PsbX, PsbY, PsbZ, Psb30/Ycf12, peripheral proteins PsbO, CyanoQ (PsbQ), PsbU, PsbV and a large number of cofactors. It forms dimeric complexes. The cofactor is heme b.

The protein resides in the cellular thylakoid membrane. In terms of biological role, this b-type cytochrome is tightly associated with the reaction center of photosystem II (PSII). PSII is a light-driven water:plastoquinone oxidoreductase that uses light energy to abstract electrons from H(2)O, generating O(2) and a proton gradient subsequently used for ATP formation. It consists of a core antenna complex that captures photons, and an electron transfer chain that converts photonic excitation into a charge separation. The protein is Cytochrome b559 subunit beta of Picosynechococcus sp. (strain ATCC 27264 / PCC 7002 / PR-6) (Agmenellum quadruplicatum).